Consider the following 191-residue polypeptide: 3-isopropylmalate dehydratase small subunit (191 aa).

It belongs to the LeuD family. LeuD type 1 subfamily. In terms of assembly, heterodimer of LeuC and LeuD.

It catalyses the reaction (2R,3S)-3-isopropylmalate = (2S)-2-isopropylmalate. The protein operates within amino-acid biosynthesis; L-leucine biosynthesis; L-leucine from 3-methyl-2-oxobutanoate: step 2/4. Catalyzes the isomerization between 2-isopropylmalate and 3-isopropylmalate, via the formation of 2-isopropylmaleate. The chain is 3-isopropylmalate dehydratase small subunit from Anaeromyxobacter sp. (strain K).